A 371-amino-acid chain; its full sequence is Glutamate 5-kinase 2 (371 aa).

Lys13 provides a ligand contact to ATP. Substrate-binding residues include Ser53, Asp140, and Asn152. ATP contacts are provided by residues Ser172–Asp173 and Thr214–Lys220. Residues Glu280–Asp356 form the PUA domain.

It belongs to the glutamate 5-kinase family.

It localises to the cytoplasm. The enzyme catalyses L-glutamate + ATP = L-glutamyl 5-phosphate + ADP. The protein operates within amino-acid biosynthesis; L-proline biosynthesis; L-glutamate 5-semialdehyde from L-glutamate: step 1/2. In terms of biological role, catalyzes the transfer of a phosphate group to glutamate to form L-glutamate 5-phosphate. In Bacillus subtilis (strain 168), this protein is Glutamate 5-kinase 2 (proJ).